Reading from the N-terminus, the 373-residue chain is Anhydro-N-acetylmuramic acid kinase (373 aa).

12-19 lines the ATP pocket; that stretch reads GTSLDGVD.

Belongs to the anhydro-N-acetylmuramic acid kinase family.

It carries out the reaction 1,6-anhydro-N-acetyl-beta-muramate + ATP + H2O = N-acetyl-D-muramate 6-phosphate + ADP + H(+). The protein operates within amino-sugar metabolism; 1,6-anhydro-N-acetylmuramate degradation. It participates in cell wall biogenesis; peptidoglycan recycling. Catalyzes the specific phosphorylation of 1,6-anhydro-N-acetylmuramic acid (anhMurNAc) with the simultaneous cleavage of the 1,6-anhydro ring, generating MurNAc-6-P. Is required for the utilization of anhMurNAc either imported from the medium or derived from its own cell wall murein, and thus plays a role in cell wall recycling. In Salmonella paratyphi A (strain ATCC 9150 / SARB42), this protein is Anhydro-N-acetylmuramic acid kinase.